A 481-amino-acid polypeptide reads, in one-letter code: Dual specificity protein kinase CLK4 (481 aa).

Disordered stretches follow at residues 1–46 and 102–143; these read MRHS…CKPH and SKSS…EDDE. Basic and acidic residues predominate over residues 8–24; the sequence is HCPDWDSRESWGHESYR. Composition is skewed to basic residues over residues 25–34 and 106–136; these read GSHKRKRRSH and VRSRRSSPKRKRNRHCSSHQSRSKSHRRKRS. Phosphoserine is present on residues S136 and S138. The Protein kinase domain maps to 159–475; the sequence is YEIVDTLGEG…LDEALQHPFF (317 aa). Residues 165–173 and K189 contribute to the ATP site; that span reads LGEGAFGKV. D286 functions as the Proton acceptor in the catalytic mechanism.

Belongs to the protein kinase superfamily. CMGC Ser/Thr protein kinase family. Lammer subfamily. Interacts with UBL5. In terms of processing, autophosphorylates on all three types of residues. Expressed in liver, kidney, heart, muscle, brain and endothelial cells.

It localises to the nucleus. It carries out the reaction L-seryl-[protein] + ATP = O-phospho-L-seryl-[protein] + ADP + H(+). It catalyses the reaction L-threonyl-[protein] + ATP = O-phospho-L-threonyl-[protein] + ADP + H(+). The enzyme catalyses L-tyrosyl-[protein] + ATP = O-phospho-L-tyrosyl-[protein] + ADP + H(+). TG003 inhibits its kinase activity and affects the regulation of alternative splicing mediated by phosphorylation of SR proteins. Functionally, dual specificity kinase acting on both serine/threonine and tyrosine-containing substrates. Phosphorylates serine- and arginine-rich (SR) proteins of the spliceosomal complex and may be a constituent of a network of regulatory mechanisms that enable SR proteins to control RNA splicing. Phosphorylates SRSF1 and SRSF3. Required for the regulation of alternative splicing of MAPT/TAU. Regulates the alternative splicing of tissue factor (F3) pre-mRNA in endothelial cells. The chain is Dual specificity protein kinase CLK4 (CLK4) from Homo sapiens (Human).